The following is a 439-amino-acid chain: Nuclear distribution protein PAC1 (439 aa).

The stretch at 55–90 (NSIVRLQSKIMELEKNCEELQKSIDEQQSSTNQISN) forms a coiled coil. WD repeat units follow at residues 106–145 (TLDA…LPLQ), 149–193 (AHMD…TLSH), 199–240 (GHEH…CIKS), 243–282 (PHTQ…SMGI), 295–335 (IPDP…FIPH), 355–392 (DHNS…LSTT), and 402–438 (NKGF…TSFM).

This sequence belongs to the WD repeat LIS1/nudF family. Self-associates. Interacts with NDL1 and dynein.

The protein resides in the cytoplasm. Its subcellular location is the cytoskeleton. It is found in the spindle pole. In terms of biological role, positively regulates the activity of the minus-end directed microtubule motor protein dynein. Plays a central role in positioning the mitotic spindle at the bud neck during cell division. Targets cytoplasmic dynein to microtubule plus ends, thereby promoting dynein-mediated microtubule sliding along the bud cortex and consequently the movement of the mitotic spindle to the bud neck. The protein is Nuclear distribution protein PAC1 of Kluyveromyces lactis (strain ATCC 8585 / CBS 2359 / DSM 70799 / NBRC 1267 / NRRL Y-1140 / WM37) (Yeast).